Reading from the N-terminus, the 427-residue chain is Probable protein phosphatase 2C 64 (427 aa).

The interval 1-36 (MGNCVARSGTAVDAGGDGGEDGKRRRRRWKAPREDQ) is disordered. The 279-residue stretch at 53–331 (TATVYTQQGR…DDCAVVCLYL (279 aa)) folds into the PPM-type phosphatase domain. 4 residues coordinate Mn(2+): Asp-89, Gly-90, Asp-276, and Asp-322.

This sequence belongs to the PP2C family. The cofactor is Mg(2+). Requires Mn(2+) as cofactor.

It carries out the reaction O-phospho-L-seryl-[protein] + H2O = L-seryl-[protein] + phosphate. The catalysed reaction is O-phospho-L-threonyl-[protein] + H2O = L-threonyl-[protein] + phosphate. The polypeptide is Probable protein phosphatase 2C 64 (Oryza sativa subsp. japonica (Rice)).